A 276-amino-acid chain; its full sequence is Secretagogin (276 aa).

EF-hand domains are found at residues 12 to 47 (LDAACFWQIWQRFDKDEKGYIKETELDAFFDDLLAK), 105 to 140 (DNSVEFMQIWRKYDADSSGFISAAELSNFLRDLFLH), 149 to 184 (ELEEYTSTMEKIFDRNKDGRLDLNDLARILALQENF), 197 to 232 (ERKRDFEKIFAHYDVSKTGALEGPEVDGFVKDMMEL), and 240 to 276 (VDLDKFREILLRHCDVNKDGKIQKSELALCLGLKINP). Ca(2+)-binding residues include aspartate 118, aspartate 120, serine 122, glutamate 129, aspartate 162, asparagine 164, aspartate 166, arginine 168, aspartate 173, aspartate 210, serine 212, threonine 214, glutamate 221, aspartate 254, asparagine 256, aspartate 258, lysine 260, and glutamate 265.

Highly expressed in pancreas, in particular in pancreatic islets and pancreatic beta-cells. Detected in prostate, adrenal gland, small intestine, stomach and thyroid (at protein level).

Its subcellular location is the cytoplasm. It localises to the secreted. The protein resides in the cytoplasmic vesicle. The protein localises to the secretory vesicle membrane. The polypeptide is Secretagogin (Scgn) (Rattus norvegicus (Rat)).